The sequence spans 180 residues: Endoribonuclease YbeY (180 aa).

Residues His-149, His-153, and His-159 each coordinate Zn(2+).

This sequence belongs to the endoribonuclease YbeY family. Requires Zn(2+) as cofactor.

It is found in the cytoplasm. Its function is as follows. Single strand-specific metallo-endoribonuclease involved in late-stage 70S ribosome quality control and in maturation of the 3' terminus of the 16S rRNA. This is Endoribonuclease YbeY from Prochlorococcus marinus subsp. pastoris (strain CCMP1986 / NIES-2087 / MED4).